Here is a 30-residue protein sequence, read N- to C-terminus: Snaclec coagulation factor IX/factor X-binding protein subunit A (30 aa).

Residues 1–30 enclose the C-type lectin domain; it reads DCPSDWSPYEGHCYKHFIKWMNNEDAERFC. A disulfide bridge links C2 with C13.

This sequence belongs to the snaclec family. In terms of assembly, heterodimer of subunits A and B; disulfide-linked. As to expression, expressed by the venom gland.

It is found in the secreted. In terms of biological role, anticoagulant protein which binds to the gamma-carboxyglutamic acid-domain regions of factors IX (F9) and factor X (F10) in the presence of calcium with a 1 to 1 stoichiometry. The chain is Snaclec coagulation factor IX/factor X-binding protein subunit A from Bothrops jararaca (Jararaca).